Here is a 244-residue protein sequence, read N- to C-terminus: Securin-like protein (244 aa).

A disordered region spans residues 31 to 53 (ELEKTPSRGGLGLVVNSSKTPGG).

In terms of assembly, forms a complex (via C-terminus) with separase sep-1. Interaction with ify-1 stabilizes sep-1. Also maintains the complex in the cytoplasm during interphase and recruits it to chromosomes during the first meiotic division. Interacts with E3 ubiquitin-protein ligase etc-1. Post-translationally, ubiquitinated by etc-1 likely at the onset of anaphase, resulting in its degradation. As to expression, expressed in germ cells including oocytes.

Its subcellular location is the cytoplasm. The protein resides in the chromosome. The protein localises to the cytoskeleton. It localises to the spindle. In terms of biological role, acts as a chaperone and as an inhibitor for separase sep-1. Plays an essential role in maintaining chromosome cohesion prior to meiotic and mitotic anaphase, in cytokinesis and in organizing the spindle and the centrosome. Ubiquitination-dependent degradation at the onset of anaphase is likely to activate sep-1 resulting in the proteolysis of the cohesin complex and the subsequent segregation of the chromosomes. Also required for cortical granule exocytosis. This is Securin-like protein from Caenorhabditis elegans.